Here is a 151-residue protein sequence, read N- to C-terminus: Allatostatin-A (151 aa).

The N-terminal stretch at 1-21 (MNSLHAHLLLLAVCCVGYIAS) is a signal peptide. Residues 22–54 (SPVIGQDQRSGDSDADVLLAADEMADNGGDNID) constitute a propeptide that is removed on maturation. Residues L64, L88, and L99 each carry the leucine amide modification. Residues 103-135 (SDYDYDQDNEIDYRVPPANYLAAERAVRPGRQN) constitute a propeptide that is removed on maturation. A disordered region spans residues 131-151 (PGRQNKRTTRPQPFNFGLGRR). L148 is subject to Leucine amide.

The protein belongs to the allatostatin family.

The protein localises to the secreted. Functionally, may act as a neurotransmitter or neuromodulator. The polypeptide is Allatostatin-A (AstA) (Drosophila melanogaster (Fruit fly)).